The following is a 195-amino-acid chain: Probable DNA-directed RNA polymerase subunit delta (195 aa).

The HTH HARE-type domain maps to 14-81 (LSMIEVAHAI…GDNTWGLRAW (68 aa)). The interval 91–195 (TVGETEDEED…DEEDKEDDEE (105 aa)) is disordered. Composition is skewed to acidic residues over residues 116-171 (TDDD…EDQL) and 179-195 (FGDDEEEDEEDKEDDEE).

The protein belongs to the RpoE family. RNAP is composed of a core of 2 alpha, a beta and a beta' subunits. The core is associated with a delta subunit and one of several sigma factors.

Participates in both the initiation and recycling phases of transcription. In the presence of the delta subunit, RNAP displays an increased specificity of transcription, a decreased affinity for nucleic acids, and an increased efficiency of RNA synthesis because of enhanced recycling. The chain is Probable DNA-directed RNA polymerase subunit delta from Limosilactobacillus fermentum (strain NBRC 3956 / LMG 18251) (Lactobacillus fermentum).